We begin with the raw amino-acid sequence, 428 residues long: Adenylosuccinate synthetase (428 aa).

GTP is bound by residues Gly-12–Lys-18 and Gly-40–Thr-42. The Proton acceptor role is filled by Asp-13. Residues Asp-13 and Gly-40 each coordinate Mg(2+). Residues Asp-13–Lys-16, Asn-38–His-41, Thr-130, Arg-144, Gln-224, Thr-239, and Arg-303 contribute to the IMP site. Catalysis depends on His-41, which acts as the Proton donor. Position 299–305 (Val-299–Arg-305) interacts with substrate. Residues Arg-305, Lys-331–Asp-333, and Gly-413–Gly-415 contribute to the GTP site.

Belongs to the adenylosuccinate synthetase family. As to quaternary structure, homodimer. The cofactor is Mg(2+).

Its subcellular location is the cytoplasm. It catalyses the reaction IMP + L-aspartate + GTP = N(6)-(1,2-dicarboxyethyl)-AMP + GDP + phosphate + 2 H(+). Its pathway is purine metabolism; AMP biosynthesis via de novo pathway; AMP from IMP: step 1/2. Plays an important role in the de novo pathway of purine nucleotide biosynthesis. Catalyzes the first committed step in the biosynthesis of AMP from IMP. This Clostridium perfringens (strain 13 / Type A) protein is Adenylosuccinate synthetase.